A 410-amino-acid polypeptide reads, in one-letter code: Phosphoglycerate kinase (410 aa).

Residues 19 to 21, R34, 57 to 60, R114, and R154 each bind substrate; these read DLN and HQGK. ATP contacts are provided by residues E332 and 358–361; that span reads GGHS.

Belongs to the phosphoglycerate kinase family. Homodimer.

The protein localises to the cytoplasm. It catalyses the reaction (2R)-3-phosphoglycerate + ATP = (2R)-3-phospho-glyceroyl phosphate + ADP. The protein operates within carbohydrate degradation; glycolysis; pyruvate from D-glyceraldehyde 3-phosphate: step 2/5. The protein is Phosphoglycerate kinase (pgk) of Pyrococcus furiosus (strain ATCC 43587 / DSM 3638 / JCM 8422 / Vc1).